The chain runs to 120 residues: Ribonuclease P protein component (120 aa).

It belongs to the RnpA family. As to quaternary structure, consists of a catalytic RNA component (M1 or rnpB) and a protein subunit.

The catalysed reaction is Endonucleolytic cleavage of RNA, removing 5'-extranucleotides from tRNA precursor.. In terms of biological role, RNaseP catalyzes the removal of the 5'-leader sequence from pre-tRNA to produce the mature 5'-terminus. It can also cleave other RNA substrates such as 4.5S RNA. The protein component plays an auxiliary but essential role in vivo by binding to the 5'-leader sequence and broadening the substrate specificity of the ribozyme. In Dictyoglomus thermophilum (strain ATCC 35947 / DSM 3960 / H-6-12), this protein is Ribonuclease P protein component.